Consider the following 183-residue polypeptide: ATP synthase subunit b, chloroplastic (183 aa).

The chain crosses the membrane as a helical span at residues 20–42; the sequence is INTNVFETNIINLAIVVGTLFYY.

This sequence belongs to the ATPase B chain family. As to quaternary structure, F-type ATPases have 2 components, F(1) - the catalytic core - and F(0) - the membrane proton channel. F(1) has five subunits: alpha(3), beta(3), gamma(1), delta(1), epsilon(1). F(0) has four main subunits: a(1), b(1), b'(1) and c(10-14). The alpha and beta chains form an alternating ring which encloses part of the gamma chain. F(1) is attached to F(0) by a central stalk formed by the gamma and epsilon chains, while a peripheral stalk is formed by the delta, b and b' chains.

The protein resides in the plastid. The protein localises to the chloroplast thylakoid membrane. Its function is as follows. F(1)F(0) ATP synthase produces ATP from ADP in the presence of a proton or sodium gradient. F-type ATPases consist of two structural domains, F(1) containing the extramembraneous catalytic core and F(0) containing the membrane proton channel, linked together by a central stalk and a peripheral stalk. During catalysis, ATP synthesis in the catalytic domain of F(1) is coupled via a rotary mechanism of the central stalk subunits to proton translocation. Component of the F(0) channel, it forms part of the peripheral stalk, linking F(1) to F(0). In Euglena gracilis, this protein is ATP synthase subunit b, chloroplastic.